We begin with the raw amino-acid sequence, 132 residues long: Small ribosomal subunit protein uS8 (132 aa).

This sequence belongs to the universal ribosomal protein uS8 family. As to quaternary structure, part of the 30S ribosomal subunit. Contacts proteins S5 and S12.

In terms of biological role, one of the primary rRNA binding proteins, it binds directly to 16S rRNA central domain where it helps coordinate assembly of the platform of the 30S subunit. The polypeptide is Small ribosomal subunit protein uS8 (Ehrlichia ruminantium (strain Welgevonden)).